Here is a 323-residue protein sequence, read N- to C-terminus: Acetyl-coenzyme A carboxylase carboxyl transferase subunit alpha (323 aa).

Residues 39–293 form the CoA carboxyltransferase C-terminal domain; the sequence is RLSKKSQQLT…RRALADSLRQ (255 aa).

This sequence belongs to the AccA family. Acetyl-CoA carboxylase is a heterohexamer composed of biotin carboxyl carrier protein (AccB), biotin carboxylase (AccC) and two subunits each of ACCase subunit alpha (AccA) and ACCase subunit beta (AccD).

It localises to the cytoplasm. The enzyme catalyses N(6)-carboxybiotinyl-L-lysyl-[protein] + acetyl-CoA = N(6)-biotinyl-L-lysyl-[protein] + malonyl-CoA. It participates in lipid metabolism; malonyl-CoA biosynthesis; malonyl-CoA from acetyl-CoA: step 1/1. Component of the acetyl coenzyme A carboxylase (ACC) complex. First, biotin carboxylase catalyzes the carboxylation of biotin on its carrier protein (BCCP) and then the CO(2) group is transferred by the carboxyltransferase to acetyl-CoA to form malonyl-CoA. The polypeptide is Acetyl-coenzyme A carboxylase carboxyl transferase subunit alpha (Paraburkholderia phytofirmans (strain DSM 17436 / LMG 22146 / PsJN) (Burkholderia phytofirmans)).